The sequence spans 244 residues: Methylthioribulose-1-phosphate dehydratase (244 aa).

Residue Cys89 coordinates substrate. 2 residues coordinate Zn(2+): His107 and His109. Catalysis depends on Glu130, which acts as the Proton donor/acceptor. Residue His192 coordinates Zn(2+).

Belongs to the aldolase class II family. MtnB subfamily. It depends on Zn(2+) as a cofactor.

It is found in the cytoplasm. The enzyme catalyses 5-(methylsulfanyl)-D-ribulose 1-phosphate = 5-methylsulfanyl-2,3-dioxopentyl phosphate + H2O. Its pathway is amino-acid biosynthesis; L-methionine biosynthesis via salvage pathway; L-methionine from S-methyl-5-thio-alpha-D-ribose 1-phosphate: step 2/6. In terms of biological role, catalyzes the dehydration of methylthioribulose-1-phosphate (MTRu-1-P) into 2,3-diketo-5-methylthiopentyl-1-phosphate (DK-MTP-1-P). This is Methylthioribulose-1-phosphate dehydratase from Saccharomyces cerevisiae (strain ATCC 204508 / S288c) (Baker's yeast).